The primary structure comprises 372 residues: Glutamate 5-kinase (372 aa).

K14 lines the ATP pocket. Substrate contacts are provided by S54, D141, and N153. ATP is bound at residue 173–174 (TD). The 79-residue stretch at 280–358 (RGHVVIDDGA…GEIESVLGYM (79 aa)) folds into the PUA domain.

It belongs to the glutamate 5-kinase family.

The protein localises to the cytoplasm. The enzyme catalyses L-glutamate + ATP = L-glutamyl 5-phosphate + ADP. Its pathway is amino-acid biosynthesis; L-proline biosynthesis; L-glutamate 5-semialdehyde from L-glutamate: step 1/2. Its function is as follows. Catalyzes the transfer of a phosphate group to glutamate to form L-glutamate 5-phosphate. The polypeptide is Glutamate 5-kinase (Paraburkholderia phymatum (strain DSM 17167 / CIP 108236 / LMG 21445 / STM815) (Burkholderia phymatum)).